The chain runs to 204 residues: Holliday junction branch migration complex subunit RuvA (204 aa).

Residues 1–64 (MIGKLKGTIE…EDQIRLFGFM (64 aa)) form a domain I region. The tract at residues 65-143 (AVLEREWFNL…AFAGEATNIG (79 aa)) is domain II. The segment at 144–151 (FKQELGEG) is flexible linker. Positions 152–204 (VAPAPVSDAVSALTNLGYSRDQAANAIAAAMKVAGDEADSAKLIRLGLKELSR) are domain III.

The protein belongs to the RuvA family. As to quaternary structure, homotetramer. Forms an RuvA(8)-RuvB(12)-Holliday junction (HJ) complex. HJ DNA is sandwiched between 2 RuvA tetramers; dsDNA enters through RuvA and exits via RuvB. An RuvB hexamer assembles on each DNA strand where it exits the tetramer. Each RuvB hexamer is contacted by two RuvA subunits (via domain III) on 2 adjacent RuvB subunits; this complex drives branch migration. In the full resolvosome a probable DNA-RuvA(4)-RuvB(12)-RuvC(2) complex forms which resolves the HJ.

It localises to the cytoplasm. The RuvA-RuvB-RuvC complex processes Holliday junction (HJ) DNA during genetic recombination and DNA repair, while the RuvA-RuvB complex plays an important role in the rescue of blocked DNA replication forks via replication fork reversal (RFR). RuvA specifically binds to HJ cruciform DNA, conferring on it an open structure. The RuvB hexamer acts as an ATP-dependent pump, pulling dsDNA into and through the RuvAB complex. HJ branch migration allows RuvC to scan DNA until it finds its consensus sequence, where it cleaves and resolves the cruciform DNA. The sequence is that of Holliday junction branch migration complex subunit RuvA from Rhizobium rhizogenes (strain K84 / ATCC BAA-868) (Agrobacterium radiobacter).